The following is a 351-amino-acid chain: Major capsid protein (351 aa).

The protein belongs to the baculoviridae p39 family.

It is found in the virion. The protein is Major capsid protein (P39) of Orgyia pseudotsugata (Douglas-fir tussock moth).